We begin with the raw amino-acid sequence, 143 residues long: Small ribosomal subunit protein uS11c (143 aa).

It belongs to the universal ribosomal protein uS11 family. In terms of assembly, part of the 30S ribosomal subunit.

The protein localises to the plastid. It is found in the chloroplast. The sequence is that of Small ribosomal subunit protein uS11c from Oryza nivara (Indian wild rice).